The following is a 295-amino-acid chain: Light-independent protochlorophyllide reductase iron-sulfur ATP-binding protein (295 aa).

Residues 39–44 (GIGKST) and lysine 68 contribute to the ATP site. Mg(2+) is bound at residue serine 43. The [4Fe-4S] cluster site is built by cysteine 124 and cysteine 158. Residue 209 to 210 (NR) participates in ATP binding.

The protein belongs to the NifH/BchL/ChlL family. As to quaternary structure, homodimer. Protochlorophyllide reductase is composed of three subunits; ChlL, ChlN and ChlB. It depends on [4Fe-4S] cluster as a cofactor.

It catalyses the reaction chlorophyllide a + oxidized 2[4Fe-4S]-[ferredoxin] + 2 ADP + 2 phosphate = protochlorophyllide a + reduced 2[4Fe-4S]-[ferredoxin] + 2 ATP + 2 H2O. Its pathway is porphyrin-containing compound metabolism; chlorophyll biosynthesis (light-independent). Its function is as follows. Component of the dark-operative protochlorophyllide reductase (DPOR) that uses Mg-ATP and reduced ferredoxin to reduce ring D of protochlorophyllide (Pchlide) to form chlorophyllide a (Chlide). This reaction is light-independent. The L component serves as a unique electron donor to the NB-component of the complex, and binds Mg-ATP. This is Light-independent protochlorophyllide reductase iron-sulfur ATP-binding protein from Prochlorococcus marinus (strain AS9601).